Reading from the N-terminus, the 494-residue chain is tRNA-2-methylthio-N(6)-dimethylallyladenosine synthase (494 aa).

In terms of domain architecture, MTTase N-terminal spans 12-131 (PTYRVVTYGC…LPVLLKRARH (120 aa)). [4Fe-4S] cluster is bound by residues C21, C60, C94, C168, C172, and C175. In terms of domain architecture, Radical SAM core spans 154 to 385 (RDSAYSAWVS…ELVDDIAWQE (232 aa)). The TRAM domain maps to 387–457 (KAQVGRAVEV…PHHLVADGGL (71 aa)).

It belongs to the methylthiotransferase family. MiaB subfamily. In terms of assembly, monomer. It depends on [4Fe-4S] cluster as a cofactor.

It is found in the cytoplasm. The enzyme catalyses N(6)-dimethylallyladenosine(37) in tRNA + (sulfur carrier)-SH + AH2 + 2 S-adenosyl-L-methionine = 2-methylsulfanyl-N(6)-dimethylallyladenosine(37) in tRNA + (sulfur carrier)-H + 5'-deoxyadenosine + L-methionine + A + S-adenosyl-L-homocysteine + 2 H(+). Catalyzes the methylthiolation of N6-(dimethylallyl)adenosine (i(6)A), leading to the formation of 2-methylthio-N6-(dimethylallyl)adenosine (ms(2)i(6)A) at position 37 in tRNAs that read codons beginning with uridine. The polypeptide is tRNA-2-methylthio-N(6)-dimethylallyladenosine synthase (Cutibacterium acnes (strain DSM 16379 / KPA171202) (Propionibacterium acnes)).